A 523-amino-acid polypeptide reads, in one-letter code: Rho guanine nucleotide exchange factor 8 (523 aa).

A compositionally biased stretch (polar residues) spans 44–57; that stretch reads VESNTPESQNSDSF. 2 disordered regions span residues 44–83 and 442–523; these read VESN…ERQQ and ETSD…KDRH. The region spanning 76–440 is the PRONE domain; sequence GKRSERQQAD…TLALKQTLLA (365 aa). A compositionally biased stretch (basic and acidic residues) spans 465 to 475; it reads EAEKHDPHSKT.

Homodimer. The homodimer interacts with ARAC5/ROP4. Interacts with ARAC11/ROP1 and ARAC10/ROP11. Interacts with PRK6. In terms of tissue distribution, expressed in pollen grains and pollen tubes.

It localises to the cell membrane. Functionally, guanine-nucleotide exchange factor (GEF) that acts as an activator of Rop (Rho of plants) GTPases by promoting the exchange of GDP for GTP. Active as homodimer. The sequence is that of Rho guanine nucleotide exchange factor 8 from Arabidopsis thaliana (Mouse-ear cress).